Here is a 354-residue protein sequence, read N- to C-terminus: Alkanal monooxygenase alpha chain (354 aa).

The protein belongs to the bacterial luciferase oxidoreductase family. In terms of assembly, heterodimer of an alpha and a beta chain.

The catalysed reaction is a long-chain fatty aldehyde + FMNH2 + O2 = a long-chain fatty acid + hnu + FMN + H2O + 2 H(+). Functionally, light-emitting reaction in luminous bacteria. In Photobacterium leiognathi, this protein is Alkanal monooxygenase alpha chain (luxA).